A 150-amino-acid chain; its full sequence is Large ribosomal subunit protein bL9 (150 aa).

It belongs to the bacterial ribosomal protein bL9 family.

Its function is as follows. Binds to the 23S rRNA. This Pseudarthrobacter chlorophenolicus (strain ATCC 700700 / DSM 12829 / CIP 107037 / JCM 12360 / KCTC 9906 / NCIMB 13794 / A6) (Arthrobacter chlorophenolicus) protein is Large ribosomal subunit protein bL9.